A 107-amino-acid polypeptide reads, in one-letter code: C-X-C motif chemokine 2 (107 aa).

The N-terminal stretch at 1-34 (MARATLSAAPSNPRLLRVALLLLLLVAASRRAAG) is a signal peptide. Disulfide bonds link Cys-43–Cys-69 and Cys-45–Cys-85.

Belongs to the intercrine alpha (chemokine CxC) family. Post-translationally, the N-terminal processed form GRO-beta(5-73) is produced by proteolytic cleavage after secretion from bone marrow stromal cells.

Its subcellular location is the secreted. Its function is as follows. Produced by activated monocytes and neutrophils and expressed at sites of inflammation. Hematoregulatory chemokine, which, in vitro, suppresses hematopoietic progenitor cell proliferation. GRO-beta(5-73) shows a highly enhanced hematopoietic activity. The sequence is that of C-X-C motif chemokine 2 (CXCL2) from Homo sapiens (Human).